We begin with the raw amino-acid sequence, 379 residues long: Histone-lysine N-methyltransferase ATXR5 (379 aa).

Residues 1-15 (MATWNASSPAASPCS) show a composition bias toward low complexity. Positions 1 to 42 (MATWNASSPAASPCSSRRRTKAPARRPSSESPPPRKMKSMAE) are disordered. Residues 1 to 44 (MATWNASSPAASPCSSRRRTKAPARRPSSESPPPRKMKSMAEIM) constitute a chloroplast transit peptide. A PHD-type zinc finger spans residues 64–114 (NVTCEKCGSGEGDDELLLCDKCDRGFHMKCLRPIVVRVPIGTWLCVDCSDQ). The PIP motif signature appears at 122-129 (QKKILHFF). M221 contributes to the substrate binding site. Positions 245–367 (PPLVVVFDPL…KGERLYYDYN (123 aa)) constitute an SET domain. S-adenosyl-L-methionine-binding positions include 255 to 257 (EGY) and 317 to 321 (RFING). R339 is a binding site for substrate. An S-adenosyl-L-methionine-binding site is contributed by Y366. Position 369-370 (369-370 (YE)) interacts with substrate. Position 373 (Y373) interacts with S-adenosyl-L-methionine.

This sequence belongs to the class V-like SAM-binding methyltransferase superfamily. Histone-lysine methyltransferase family. TRX/MLL subfamily. Isoform 1 but not isoform 2 interacts with PCNA1 and PCNA2. Interacts (via PHD domain) with HTR1 (via N-terminus). Isoform 2 interacts with IPS1. Expressed in leaves, roots, stems, flowers, siliques and developing pollen. Up-regulated in tissues where cell division is active.

The protein resides in the nucleus. The protein localises to the plastid. It localises to the chloroplast. It catalyses the reaction L-lysyl(27)-[histone H3] + S-adenosyl-L-methionine = N(6)-methyl-L-lysyl(27)-[histone H3] + S-adenosyl-L-homocysteine + H(+). Its function is as follows. Histone methyltransferase that specifically monomethylates 'Lys-27' of histone H3 (H3K27me1). Has much higher activity on nucleosomes containing H3.1 than H3.3. Involved in the formation of constitutive heterochromatin and the silencing of heterochromatic elements. Influences which sets of rRNA gene variants are expressed or silenced. The sequence is that of Histone-lysine N-methyltransferase ATXR5 (ATXR5) from Arabidopsis thaliana (Mouse-ear cress).